Reading from the N-terminus, the 274-residue chain is Factor H binding protein (274 aa).

A signal peptide spans 1–19 (MNRTAFCCLSLTTALILTA). Cysteine 20 carries N-palmitoyl cysteine lipidation. Cysteine 20 is lipidated: S-diacylglycerol cysteine. Positions 27-119 (VAADIGAGLA…LESGEFQVYK (93 aa)) are domain A. Residues 120 to 183 (QSHSALTAFQ…TAFGSDDAGG (64 aa)) form a domain B region. Residues 184-274 (KLTYTIDFAA…IRHIGLAAKQ (91 aa)) are domain C.

This sequence belongs to the factor H binding-protein family. Binds to host factor H (fH from human). Both fHbp beta-barrels contact Sushi domains 6 and 7 in fH (also called complement control protein domains, CCP). This interaction probably mimics the normal (carbohydrate-dependent) mode of fH recruitement, regulating fH activity. Sucrose octasulphate inhibits the fHbp-fH interaction. Protein is lipidated in N.meningitidis upon growth in radioactive palmitic acid, probably on Cys-20.

The protein resides in the cell outer membrane. The protein localises to the secreted. Its subcellular location is the extracellular vesicle. It is found in the bacterial extracellular vesicle. A bacterial surface lipoprotein that binds host (human) complement factor H (fH, gene CFH), binding contributes to the avoidance of complement-mediated lysis by N.meningitidis. Binding of fH to the bacteria surface is independent of bacterial sialic acid moieties. fH binding affinity is high enough that it may sequester plasma fH, depleting its circulating levels and de-regulating complement in the host. This protein induces high levels of bactericidal antibodies in mice. The chain is Factor H binding protein (fhbP) from Neisseria meningitidis serogroup B (strain ATCC BAA-335 / MC58).